The sequence spans 794 residues: K(+)-insensitive pyrophosphate-energized proton pump (794 aa).

The next 5 membrane-spanning stretches (helical) occupy residues 20 to 40 (ALVA…GVLV), 74 to 94 (TLGV…ADDW), 102 to 122 (IFFL…MWLA), 163 to 183 (GVVG…VVLV), and 194 to 214 (GFGL…GIFT). K215 provides a ligand contact to substrate. Mg(2+)-binding residues include D218, D222, N245, and D248. 6 helical membrane passes run 264–284 (YAVT…DFGL), 285–305 (AFPL…IFAV), 321–341 (GFFI…FVYL), 365–385 (ILAL…QQLT), 422–442 (AVYT…LGGT), and 446–466 (LALF…GVIV). Mg(2+) is bound at residue D476. 3 consecutive transmembrane segments (helical) span residues 508-528 (AITK…LFGS), 564-584 (VGLI…INAV), and 641-661 (IFIG…GAIG). Ca(2+)-binding residues include D678, D704, and D708. Substrate is bound at residue K711. 2 helical membrane passes run 717–737 (AINP…PAVI) and 747–767 (VVVR…AVYV).

The protein belongs to the H(+)-translocating pyrophosphatase (TC 3.A.10) family. K(+)-insensitive subfamily. In terms of assembly, homodimer. It depends on Mg(2+) as a cofactor.

The protein resides in the cell membrane. The catalysed reaction is diphosphate + H2O + H(+)(in) = 2 phosphate + 2 H(+)(out). Its function is as follows. Proton pump that utilizes the energy of pyrophosphate hydrolysis as the driving force for proton movement across the membrane. Generates a proton motive force. This is K(+)-insensitive pyrophosphate-energized proton pump from Streptomyces coelicolor (strain ATCC BAA-471 / A3(2) / M145).